The primary structure comprises 205 residues: Isochorismatase domain-containing protein 2 (205 aa).

The protein belongs to the isochorismatase family. Interacts with CDKN2A.

It is found in the cytoplasm. Its subcellular location is the nucleus. The chain is Isochorismatase domain-containing protein 2 (ISOC2) from Macaca fascicularis (Crab-eating macaque).